A 276-amino-acid polypeptide reads, in one-letter code: B3 domain-containing protein REM22 (276 aa).

The TF-B3 DNA-binding region spans serine 11–glycine 115. The tract at residues glycine 141–lysine 164 is disordered. The segment covering glutamate 144–arginine 154 has biased composition (basic and acidic residues).

The protein localises to the nucleus. The sequence is that of B3 domain-containing protein REM22 (REM22) from Arabidopsis thaliana (Mouse-ear cress).